A 406-amino-acid chain; its full sequence is Lissencephaly-1 homolog (406 aa).

Positions 7 to 39 (QREELNKAIADYLRSNGYESALEAFQKEAEMPG) constitute a LisH domain. Residues 54–81 (TSVIRLQKKVMDLEAKLAEAEKEFQSGG) are a coiled coil. Residues 74–89 (EKEFQSGGPNKKERSP) are compositionally biased toward basic and acidic residues. The interval 74–99 (EKEFQSGGPNKKERSPSEWIPRPPAR) is disordered. 7 WD repeats span residues 104-145 (GHRS…RTLK), 146-185 (GHTDAVQDVSFDQQGKLLASCSADMTIKLWDFQTFENIKT), 188-227 (GHDHNVSSVHFMPNGDFLISASRDKTIKMWELATGYCVKT), 230-269 (GHREWVRTVRVNQDGSLLASCSNDQTVRVWVVANKECKAE), 272-329 (EHEH…CIMT), 332-371 (GHDNWVRGVVWHPGGKYIISASDDKTIRVWDYKNKRCQKT), and 374-406 (AHQHFCTSIDFHRSAPYVITGSVDQTVKVWECR).

It belongs to the WD repeat LIS1/nudF family.

Its subcellular location is the cytoplasm. It is found in the cytoskeleton. The protein resides in the microtubule organizing center. It localises to the centrosome. In terms of biological role, positively regulates the activity of the minus-end directed microtubule motor protein dynein. May enhance dynein-mediated microtubule sliding by targeting dynein to the microtubule plus end. Required for several dynein- and microtubule-dependent processes. This chain is Lissencephaly-1 homolog, found in Branchiostoma floridae (Florida lancelet).